Here is a 428-residue protein sequence, read N- to C-terminus: Serine--tRNA ligase (428 aa).

Position 231–233 (231–233 (TAE)) interacts with L-serine. 262–264 (RSE) contributes to the ATP binding site. Glu-285 lines the L-serine pocket. Residue 349–352 (EISS) coordinates ATP. Ser-385 provides a ligand contact to L-serine.

The protein belongs to the class-II aminoacyl-tRNA synthetase family. Type-1 seryl-tRNA synthetase subfamily. In terms of assembly, homodimer. The tRNA molecule binds across the dimer.

It localises to the cytoplasm. The catalysed reaction is tRNA(Ser) + L-serine + ATP = L-seryl-tRNA(Ser) + AMP + diphosphate + H(+). The enzyme catalyses tRNA(Sec) + L-serine + ATP = L-seryl-tRNA(Sec) + AMP + diphosphate + H(+). The protein operates within aminoacyl-tRNA biosynthesis; selenocysteinyl-tRNA(Sec) biosynthesis; L-seryl-tRNA(Sec) from L-serine and tRNA(Sec): step 1/1. Catalyzes the attachment of serine to tRNA(Ser). Is also able to aminoacylate tRNA(Sec) with serine, to form the misacylated tRNA L-seryl-tRNA(Sec), which will be further converted into selenocysteinyl-tRNA(Sec). The polypeptide is Serine--tRNA ligase (Staphylococcus aureus (strain MW2)).